Reading from the N-terminus, the 64-residue chain is MNFSRIFFFVFACLTALAMVNAAPEPKWKLFKKIEKVGQNIRDGIIKAGPAVAVVGQATQIAKG.

An N-terminal signal peptide occupies residues 1–22; the sequence is MNFSRIFFFVFACLTALAMVNA. The propeptide at 23–26 is removed by a dipeptidylpeptidase; it reads APEP. The residue at position 63 (K63) is a Lysine amide.

This sequence belongs to the cecropin family. A protein with the same sequence as cecropin A, but lacking the carboxyl blocking group, has been isolated and called cecropin C.

The protein resides in the secreted. Functionally, cecropins have lytic and antibacterial activity against several Gram-positive and Gram-negative bacteria. This Hyalophora cecropia (Cecropia moth) protein is Cecropin-A.